Reading from the N-terminus, the 387-residue chain is Exodeoxyribonuclease 7 large subunit (387 aa).

The protein belongs to the XseA family. In terms of assembly, heterooligomer composed of large and small subunits.

The protein resides in the cytoplasm. The enzyme catalyses Exonucleolytic cleavage in either 5'- to 3'- or 3'- to 5'-direction to yield nucleoside 5'-phosphates.. Functionally, bidirectionally degrades single-stranded DNA into large acid-insoluble oligonucleotides, which are then degraded further into small acid-soluble oligonucleotides. In Campylobacter jejuni subsp. jejuni serotype O:6 (strain 81116 / NCTC 11828), this protein is Exodeoxyribonuclease 7 large subunit.